Here is a 767-residue protein sequence, read N- to C-terminus: Granule-bound starch synthase 2, chloroplastic/amyloplastic (767 aa).

The transit peptide at 1-45 directs the protein to the chloroplast; the sequence is MENSILLHSGNQFHPNLPLLALRPKKLSLIHGSSREQMWRIKRVK. Disordered stretches follow at residues 160–204 and 226–268; these read KRDL…SSQE and YMPS…EKPP. Residues 172 to 188 show a composition bias toward low complexity; it reads SRSSITASSQISSTVSS. Over residues 230–245 the composition is skewed to basic and acidic residues; the sequence is LRKESSASHVEQRNEN. Residues 253–262 show a composition bias toward acidic residues; it reads ANEETEDPVN. Position 290 (Lys290) interacts with ADP-alpha-D-glucose.

Belongs to the glycosyltransferase 1 family. Bacterial/plant glycogen synthase subfamily.

Its subcellular location is the plastid. The protein localises to the chloroplast. It localises to the amyloplast. It carries out the reaction [(1-&gt;4)-alpha-D-glucosyl](n) + ADP-alpha-D-glucose = [(1-&gt;4)-alpha-D-glucosyl](n+1) + ADP + H(+). It functions in the pathway glycan biosynthesis; starch biosynthesis. Its function is as follows. Accounts for only 10 to 15% of the total soluble starch synthase activity in tubers. This Solanum tuberosum (Potato) protein is Granule-bound starch synthase 2, chloroplastic/amyloplastic (SS2).